Reading from the N-terminus, the 407-residue chain is Putative colanic acid biosynthesis glycosyl transferase WcaI (407 aa).

It participates in slime biogenesis; slime polysaccharide biosynthesis. The chain is Putative colanic acid biosynthesis glycosyl transferase WcaI (wcaI) from Escherichia coli (strain K12).